A 137-amino-acid polypeptide reads, in one-letter code: Large-conductance mechanosensitive channel (137 aa).

The next 2 membrane-spanning stretches (helical) occupy residues 9-29 and 79-99; these read AFAV…GAAF and IQSV…VKAI.

The protein belongs to the MscL family. As to quaternary structure, homopentamer.

Its subcellular location is the cell inner membrane. Channel that opens in response to stretch forces in the membrane lipid bilayer. May participate in the regulation of osmotic pressure changes within the cell. The chain is Large-conductance mechanosensitive channel from Pseudomonas fluorescens (strain Pf0-1).